Reading from the N-terminus, the 449-residue chain is MATDIEQKVMEAKMASIVLASVDTQTKDNALEAMAKALDANRNKILEANKADLEEAERMKNEGKLSQALVDRLKVTDPKIDGMISGIRDVIKLEDPSGRTINTLELDKGLELYQVSSPIGLIGVIFESRPDVVPQVMSLCLKSGNATVFKGGSEALNSNRVIFNILVEALEDTPGIPKGAFQLMETREEVMDILALDEYIDLLIPRGSNDFVKFIQDNTKISVLGHADGICHVYVDTNADLNKAYDVCFDSKVQYPAVCNAMETLLINREIAEEFLPEMVRRYEEVGVELRFDEGSYAIAEKLGSANIAKATEDDWKTEYNDFILSIKLVDSIEEAIDHINKYGSHHTDAIITENKTKRKQFIALVDSSSVMVNASTRFADGFRYGKGAEVGISTNKIHARGPVGMEGLVIYKYVLLGNGDKVATYAGDTPRPFTHKELDSKLSDIINE.

It belongs to the gamma-glutamyl phosphate reductase family.

The protein resides in the cytoplasm. The catalysed reaction is L-glutamate 5-semialdehyde + phosphate + NADP(+) = L-glutamyl 5-phosphate + NADPH + H(+). It participates in amino-acid biosynthesis; L-proline biosynthesis; L-glutamate 5-semialdehyde from L-glutamate: step 2/2. Its function is as follows. Catalyzes the NADPH-dependent reduction of L-glutamate 5-phosphate into L-glutamate 5-semialdehyde and phosphate. The product spontaneously undergoes cyclization to form 1-pyrroline-5-carboxylate. The protein is Gamma-glutamyl phosphate reductase of Methanococcoides burtonii (strain DSM 6242 / NBRC 107633 / OCM 468 / ACE-M).